The primary structure comprises 537 residues: Cytochrome bd ubiquinol oxidase subunit 1 (537 aa).

Residues 1 to 24 are Cytoplasmic-facing; sequence MISESVVDLSRLQFAMTALYHFLF. Heme b is bound at residue H21. A helical membrane pass occupies residues 25-44; it reads VPLTLGMTFLLAIMESVYVM. The Periplasmic segment spans residues 45–96; it reads TGKQVYKDMVKFWGKLFGINFALGVTTGITMEFQFGTNWAYYSHYVGDIFGA. Residues 97-116 traverse the membrane as a helical segment; it reads PLAIEGLTAFFLESTFIGMF. Residues 117–131 lie on the Cytoplasmic side of the membrane; the sequence is FFGWDRLSKIQHLAV. The chain crosses the membrane as a helical span at residues 132-151; it reads TWLVALGSNLSALWILVANG. At 152-189 the chain is on the periplasmic side; that stretch reads WMQHPVGAEFNFETMRMELVDFGALLLNPVAQVKFVHT. Position 188 (H188) interacts with heme b. A helical transmembrane segment spans residues 190–209; the sequence is VASGYVTGAVFVLAISSYYL. At 210–221 the chain is on the cytoplasmic side; the sequence is LKKRDLGFARRS. Residues 222-241 traverse the membrane as a helical segment; the sequence is FAIASAFGMASILSVIVLGD. Topologically, residues 242 to 394 are periplasmic; the sequence is ESGYEVGEVQ…VASMFWSFRA (153 aa). M395 provides a ligand contact to heme b. The chain crosses the membrane as a helical span at residues 395-414; the sequence is MVGAGFAMLILFVCAFWASA. Residues 415-472 lie on the Cytoplasmic side of the membrane; sequence RKNEESKPWLLKFALYSLPLPWIATQTGWFVAEHGRQPWTIGGVLPTHLSASSLSTGD. The chain crosses the membrane as a helical span at residues 473-492; that stretch reads LWGSLIALIAFYTLLLVVEM. The Periplasmic portion of the chain corresponds to 493 to 537; the sequence is YLMIRFARLGPSSLHTGRYHFEQLEQHAVKHASPSQADPQQPVNA.

This sequence belongs to the cytochrome ubiquinol oxidase subunit 1 family. In terms of assembly, heterodimer of subunits I and II. Heme b serves as cofactor. It depends on heme d cis-diol as a cofactor.

The protein localises to the cell inner membrane. The catalysed reaction is 2 a ubiquinol + O2(in) + 4 H(+)(in) = 2 a ubiquinone + 2 H2O(in) + 4 H(+)(out). Functionally, may be involved in maintaining the low intracellular oxygen concentration required for nitrogen fixation. The polypeptide is Cytochrome bd ubiquinol oxidase subunit 1 (cydA) (Azotobacter vinelandii).